Consider the following 216-residue polypeptide: Probable transaldolase (216 aa).

Lys-84 serves as the catalytic Schiff-base intermediate with substrate.

This sequence belongs to the transaldolase family. Type 3B subfamily.

The protein resides in the cytoplasm. The enzyme catalyses D-sedoheptulose 7-phosphate + D-glyceraldehyde 3-phosphate = D-erythrose 4-phosphate + beta-D-fructose 6-phosphate. The protein operates within carbohydrate degradation; pentose phosphate pathway; D-glyceraldehyde 3-phosphate and beta-D-fructose 6-phosphate from D-ribose 5-phosphate and D-xylulose 5-phosphate (non-oxidative stage): step 2/3. Functionally, transaldolase is important for the balance of metabolites in the pentose-phosphate pathway. This Exiguobacterium sp. (strain ATCC BAA-1283 / AT1b) protein is Probable transaldolase.